Reading from the N-terminus, the 206-residue chain is Large ribosomal subunit protein uL3 (206 aa).

A disordered region spans residues 127 to 151 (SGGPSSHGSKFHRHLGGTGQATTPA).

Belongs to the universal ribosomal protein uL3 family. As to quaternary structure, part of the 50S ribosomal subunit. Forms a cluster with proteins L14 and L19.

Its function is as follows. One of the primary rRNA binding proteins, it binds directly near the 3'-end of the 23S rRNA, where it nucleates assembly of the 50S subunit. The chain is Large ribosomal subunit protein uL3 from Borreliella afzelii (strain PKo) (Borrelia afzelii).